Reading from the N-terminus, the 145-residue chain is MFIETDYFGKIEINEAETITFVSEIPGFPDSKTFVLIPYGEDLPFWSLQSIEEQACAFVVTNPFWHKSDYAFELSDGAKDQLGIEEAEHVSVYSIVTLREPFESSTLNLKAPIVIETKERRGKQVILDDAYPARYPLGGTKAEVR.

Belongs to the FliW family. In terms of assembly, interacts with translational regulator CsrA and flagellin(s).

It localises to the cytoplasm. Functionally, acts as an anti-CsrA protein, binds CsrA and prevents it from repressing translation of its target genes, one of which is flagellin. Binds to flagellin and participates in the assembly of the flagellum. The sequence is that of Flagellar assembly factor FliW from Exiguobacterium sp. (strain ATCC BAA-1283 / AT1b).